The primary structure comprises 77 residues: U11-lycotoxin-Ls1a (77 aa).

The N-terminal stretch at 1–20 is a signal peptide; it reads MKLIILTGLVLFAIVSFIEA. A propeptide spanning residues 21–26 is cleaved from the precursor; it reads EEETGR.

This sequence belongs to the neurotoxin 19 (CSTX) family. 10 (U11-Lctx) subfamily. In terms of processing, contains 4 disulfide bonds. In terms of tissue distribution, expressed by the venom gland.

The protein localises to the secreted. In Lycosa singoriensis (Wolf spider), this protein is U11-lycotoxin-Ls1a.